The chain runs to 1133 residues: Protein cordon-bleu (1133 aa).

The span at 1-11 shows a compositional bias: pro residues; the sequence is MKARAPPPPGK. The disordered stretch occupies residues 1–25; the sequence is MKARAPPPPGKPAAQNVHSEQKLPH. Phosphoserine occurs at positions 31, 34, 196, 219, 256, and 278. Disordered regions lie at residues 246 to 393 and 442 to 568; these read AEHL…SVNG and QGGI…GQAS. Over residues 272 to 301 the composition is skewed to polar residues; that stretch reads CVTTPNSPSLHSRSLTLGPSLSLGNISGMS. Residues 307-312 carry the KKRRAP 1 motif; it reads KKRRAP. Phosphoserine is present on residues Ser330 and Ser333. The KKRRAP 2 motif lies at 340–345; it reads KKRRAP. Pro residues predominate over residues 345–358; that stretch reads PAPPPPQPPPPSPV. Ser356 carries the phosphoserine modification. Residues 361–371 are compositionally biased toward basic and acidic residues; it reads NRKEDKEENRK. Composition is skewed to polar residues over residues 382–393 and 442–464; these read TDTSSLTSSVNG and QGGI…QPFI. Ser447 is modified (phosphoserine). Basic and acidic residues predominate over residues 512-524; it reads STDDPKAKDKDKM. The residue at position 614 (Ser614) is a Phosphoserine. The tract at residues 664 to 720 is disordered; the sequence is APSTTITATSEKPQRDETKAGFTLTTPEQQPASQEYGAPPEEDRSRPHSAVSCPVKV. Composition is skewed to polar residues over residues 665–674 and 686–696; these read PSTTITATSE and TLTTPEQQPAS. Phosphoserine is present on Ser924. 2 disordered regions span residues 942–961 and 990–1018; these read PSPL…SSIF and HTSG…YVEA. WH2 domains follow at residues 981-1001 and 1021-1041; these read LHSA…LRKT and ERSA…LRKV. A compositionally biased stretch (basic and acidic residues) spans 993-1010; sequence GGRDKLRKTAEQASEGRP. Positions 1063–1091 are disordered; it reads DKPQQEDRGLPPPPALPPPSTPASQVPSA. A compositionally biased stretch (pro residues) spans 1072–1083; that stretch reads LPPPPALPPPST. Ser1099 bears the Phosphoserine mark. In terms of domain architecture, WH2 3 spans 1109–1129; the sequence is ARQALMDAIRSGTGAARLRKV.

In terms of assembly, identified in a complex composed of ACTA1, COBL, GSN AND TMSB4X. Identified in a complex composed of COBL, PACSIN1 and WASL. Interacts with PACSIN1, PACSIN2 and PACSIN3. Interacts (via WH2 domains) with actin monomers. Interacts with both PACSIN1 and DBNL. Detected in brain (at protein level).

It localises to the cell membrane. Its subcellular location is the cytoplasm. It is found in the cytoskeleton. The protein localises to the cell projection. The protein resides in the ruffle. It localises to the cytosol. Plays an important role in the reorganization of the actin cytoskeleton. Binds to and sequesters actin monomers (G actin). Nucleates actin polymerization by assembling three actin monomers in cross-filament orientation and thereby promotes growth of actin filaments at the barbed end. Can also mediate actin depolymerization at barbed ends and severing of actin filaments. Promotes formation of cell ruffles. Regulates dendrite branching in Purkinje cells. Regulates neuron morphogenesis and increases branching of axons and dendrites. This chain is Protein cordon-bleu (Cobl), found in Rattus norvegicus (Rat).